A 420-amino-acid polypeptide reads, in one-letter code: Glucose-1-phosphate adenylyltransferase (420 aa).

Alpha-D-glucose 1-phosphate contacts are provided by residues Y107, G172, 187 to 188 (EK), and S205.

It belongs to the bacterial/plant glucose-1-phosphate adenylyltransferase family. Homotetramer.

It catalyses the reaction alpha-D-glucose 1-phosphate + ATP + H(+) = ADP-alpha-D-glucose + diphosphate. It participates in glycan biosynthesis; glycogen biosynthesis. In terms of biological role, involved in the biosynthesis of ADP-glucose, a building block required for the elongation reactions to produce glycogen. Catalyzes the reaction between ATP and alpha-D-glucose 1-phosphate (G1P) to produce pyrophosphate and ADP-Glc. This is Glucose-1-phosphate adenylyltransferase from Rhizobium rhizogenes (strain K84 / ATCC BAA-868) (Agrobacterium radiobacter).